The following is an 89-amino-acid chain: Small ribosomal subunit protein bS20 (89 aa).

Belongs to the bacterial ribosomal protein bS20 family.

Its function is as follows. Binds directly to 16S ribosomal RNA. The sequence is that of Small ribosomal subunit protein bS20 from Hahella chejuensis (strain KCTC 2396).